The primary structure comprises 129 residues: Small ribosomal subunit protein uS8 (129 aa).

This sequence belongs to the universal ribosomal protein uS8 family. In terms of assembly, part of the 30S ribosomal subunit. Contacts proteins S5 and S12.

Functionally, one of the primary rRNA binding proteins, it binds directly to 16S rRNA central domain where it helps coordinate assembly of the platform of the 30S subunit. This chain is Small ribosomal subunit protein uS8, found in Mesoplasma florum (strain ATCC 33453 / NBRC 100688 / NCTC 11704 / L1) (Acholeplasma florum).